A 295-amino-acid chain; its full sequence is Trimeric intracellular cation channel type 1B.1 (295 aa).

The Lumenal segment spans residues 1-27 (MVVPESFQLDQEILLDAGAQLHRLKMY). A helical membrane pass occupies residues 28-45 (PYFDVAHYLLMIIEVRDD). The Cytoplasmic portion of the chain corresponds to 46 to 56 (LGSAASIFSRK). A discontinuously helical transmembrane segment spans residues 57 to 80 (HPLSCWLSSMLMCFADAFLANFLL). Over 81–89 (GEPVIAPFK) the chain is Lumenal. The chain crosses the membrane as a helical span at residues 90–107 (RHDDIILATIIWYLVFYA). Over 108–119 (PFDGIYKIAKIT) the chain is Cytoplasmic. A helical transmembrane segment spans residues 120–148 (PVKCVLAVMKEVKRAYKVSHGVSHAAKLY). Residues Lys129 and Arg133 each coordinate a 1,2-diacyl-sn-glycero-3-phospho-(1D-myo-inositol-4,5-bisphosphate). At 149–150 (PN) the chain is on the lumenal side. A discontinuously helical transmembrane segment spans residues 151-177 (SYIVQVLVGTAKGAGSGIVRTLEQLVR). An a 1,2-diacyl-sn-glycero-3-phospho-(1D-myo-inositol-4,5-bisphosphate)-binding site is contributed by Ser166. Residues 178 to 188 (GVWLPTHNELL) are Cytoplasmic-facing. The chain crosses the membrane as a helical span at residues 189–210 (RPSFATKACVVAASVLALEKSG). At 211-215 (TYLTA) the chain is on the lumenal side. The helical transmembrane segment at 216-239 (PHDLVYLVIVGFFVYFKLSAVILH) threads the bilayer. Residues 240 to 295 (VTDPFAPIENLFCAIFMGGIWDAVSRALAASRDRRAAGAHSNENGSSISTPEKKDQ) lie on the Cytoplasmic side of the membrane. The interval 274–295 (RAAGAHSNENGSSISTPEKKDQ) is disordered.

The protein belongs to the TMEM38 family. Homotrimer; trimerization probably requires binding to phosphatidylinositol 4,5-bisphosphate (PIP2).

Its subcellular location is the endoplasmic reticulum membrane. Functionally, potassium channel that mediates transmembrane potassium transport. Might be required for maintenance of rapid intracellular calcium release. May act as a counter-ion channel that functions in synchronization with calcium release from intracellular stores. Binds phosphatidylinositol 4,5-bisphosphate (PIP2). In Caenorhabditis elegans, this protein is Trimeric intracellular cation channel type 1B.1.